Here is a 136-residue protein sequence, read N- to C-terminus: Protein NrdI (136 aa).

Belongs to the NrdI family.

Probably involved in ribonucleotide reductase function. The chain is Protein NrdI from Salmonella typhi.